Reading from the N-terminus, the 271-residue chain is Phosphonates import ATP-binding protein PhnC 2 (271 aa).

An ABC transporter domain is found at 2–245; sequence LTIDKLTKRF…VARDIYGAGA (244 aa). Residue 34–41 coordinates ATP; that stretch reads GRSGAGKS.

This sequence belongs to the ABC transporter superfamily. Phosphonates importer (TC 3.A.1.9.1) family. As to quaternary structure, the complex is composed of two ATP-binding proteins (PhnC), two transmembrane proteins (PhnE) and a solute-binding protein (PhnD).

The protein resides in the cell inner membrane. It catalyses the reaction phosphonate(out) + ATP + H2O = phosphonate(in) + ADP + phosphate + H(+). Functionally, part of the ABC transporter complex PhnCDE involved in phosphonates import. Responsible for energy coupling to the transport system. This is Phosphonates import ATP-binding protein PhnC 2 from Roseobacter denitrificans (strain ATCC 33942 / OCh 114) (Erythrobacter sp. (strain OCh 114)).